Reading from the N-terminus, the 66-residue chain is Large ribosomal subunit protein uL29 (66 aa).

It belongs to the universal ribosomal protein uL29 family.

This chain is Large ribosomal subunit protein uL29, found in Agrobacterium fabrum (strain C58 / ATCC 33970) (Agrobacterium tumefaciens (strain C58)).